A 252-amino-acid chain; its full sequence is Carbohydrate deacetylase (252 aa).

Positions 59 and 122 each coordinate Mg(2+).

It belongs to the YdjC deacetylase family. Homodimer. The cofactor is Mg(2+).

Probably catalyzes the deacetylation of acetylated carbohydrates an important step in the degradation of oligosaccharides. This chain is Carbohydrate deacetylase, found in Vibrio vulnificus (strain CMCP6).